The chain runs to 30 residues: Trypsin inhibitor 4 (30 aa).

Disulfide bonds link C3/C20, C10/C22, and C16/C28.

It belongs to the protease inhibitor I7 (squash-type serine protease inhibitor) family.

It is found in the secreted. Inhibits trypsin; probably participates in a plant defense mechanism. This Momordica charantia (Bitter gourd) protein is Trypsin inhibitor 4.